A 164-amino-acid polypeptide reads, in one-letter code: Choriogonadotropin subunit beta (164 aa).

Residues 1–20 (MEMLQGLLLCLLLSTGGAWA) form the signal peptide. Intrachain disulfides connect Cys29-Cys77, Cys43-Cys92, Cys46-Cys130, Cys54-Cys108, Cys58-Cys110, and Cys113-Cys120. N-linked (GlcNAc...) asparagine glycosylation occurs at Asn50. The disordered stretch occupies residues 135–164 (FQDSSSKDPPRNLTSPSQLLEPADPPLVPQ). The O-linked (GalNAc...) serine glycan is linked to Ser140. N-linked (GlcNAc...) asparagine glycosylation occurs at Asn146. An O-linked (GalNAc...) serine glycan is attached at Ser151.

The protein belongs to the glycoprotein hormones subunit beta family. In terms of assembly, heterodimer of a common alpha chain and a unique beta chain which confers biological specificity to thyrotropin, lutropin, follitropin and gonadotropin. As to expression, placenta.

The protein localises to the secreted. In terms of biological role, stimulates the ovaries to synthesize the steroids that are essential for the maintenance of pregnancy. The protein is Choriogonadotropin subunit beta (CGB) of Callithrix jacchus (White-tufted-ear marmoset).